We begin with the raw amino-acid sequence, 83 residues long: Protein CASPARIAN STRIP INTEGRITY FACTOR 2 (83 aa).

The N-terminal stretch at 1 to 28 (MGLLPLVKKLGFIIFLLVSASAFALCSA) is a signal peptide. A disordered region spans residues 61-83 (SRDYGHSSPKPKLVRPPFKLIPN). Tyr-64 carries the sulfotyrosine modification. Residues Pro-69 and Pro-71 each carry the hydroxyproline modification.

Interacts with the specific receptor kinases GSO1 and GSO2. Expressed exclusively in the root stele.

Functionally, peptide hormone required for contiguous Casparian strip diffusion barrier formation in roots via the regulation of CASPs protein expression and distribution in a GSO1-GSO2 signaling pathway. The Casparian strip is required for ion homeostasis (e.g. iron and potassium ions). The chain is Protein CASPARIAN STRIP INTEGRITY FACTOR 2 from Arabidopsis thaliana (Mouse-ear cress).